Reading from the N-terminus, the 340-residue chain is MLNEELLPIWLDHDCGHDDAFAMLLAFHSKIFNILGISSVHGNQTVDKTTINALITLEIIGKSNCGYEVVKGVRSPMCRPEQVCSEIHGETGLDCPTAELPKPTQLPITDRPAIQVMFEKISKFYTDNQQKQKVIIVATGSLTNVALLFAVYPQIKPMVEVSLLGGSINFGNISPAAEYNILVDPEAAKVVFESGVKVIMVPLECSHKALVNEKILERISDIEKADGKQTQFIKIIKGLLLFFADNYKSTFDFDHPPLHDPLAVAYLIDPTIFKCKLMRVDIETSSHLCLGRTVVDLFSMSKLQKNVHVCTDINVDKFWDLMINAIDNCYNHLYKSNILK.

D14 is a Ca(2+) binding site. D18 is a binding site for substrate. Residues D19 and T139 each contribute to the Ca(2+) site. Substrate-binding residues include N172, E178, and N180. The active-site Proton donor is H259. A Ca(2+)-binding site is contributed by D260.

This sequence belongs to the IUNH family. It depends on Ca(2+) as a cofactor.

The catalysed reaction is a purine D-ribonucleoside + H2O = a purine nucleobase + D-ribose. It carries out the reaction a pyrimidine ribonucleoside + H2O = a pyrimidine nucleobase + D-ribose. It functions in the pathway purine metabolism; purine nucleoside salvage. Catalyzes the hydrolysis of the N-glycosidic bond of purine and/or pyrimidine nucleosides into ribose and the base. The sequence is that of Probable ribonucleoside hydrolase (iunH) from Dictyostelium discoideum (Social amoeba).